We begin with the raw amino-acid sequence, 136 residues long: Protein NrdI (136 aa).

The protein belongs to the NrdI family.

Its function is as follows. Probably involved in ribonucleotide reductase function. The chain is Protein NrdI from Salmonella agona (strain SL483).